Here is a 331-residue protein sequence, read N- to C-terminus: Tetraacyldisaccharide 4'-kinase (331 aa).

55–62 (SVGGNGKT) provides a ligand contact to ATP.

It belongs to the LpxK family.

The enzyme catalyses a lipid A disaccharide + ATP = a lipid IVA + ADP + H(+). Its pathway is glycolipid biosynthesis; lipid IV(A) biosynthesis; lipid IV(A) from (3R)-3-hydroxytetradecanoyl-[acyl-carrier-protein] and UDP-N-acetyl-alpha-D-glucosamine: step 6/6. Its function is as follows. Transfers the gamma-phosphate of ATP to the 4'-position of a tetraacyldisaccharide 1-phosphate intermediate (termed DS-1-P) to form tetraacyldisaccharide 1,4'-bis-phosphate (lipid IVA). This is Tetraacyldisaccharide 4'-kinase from Aeromonas salmonicida (strain A449).